Here is a 230-residue protein sequence, read N- to C-terminus: Cytidylate kinase (230 aa).

16–24 contacts ATP; sequence GPASAGKST.

This sequence belongs to the cytidylate kinase family. Type 1 subfamily.

The protein localises to the cytoplasm. The enzyme catalyses CMP + ATP = CDP + ADP. The catalysed reaction is dCMP + ATP = dCDP + ADP. This chain is Cytidylate kinase, found in Lactobacillus johnsonii (strain CNCM I-12250 / La1 / NCC 533).